The following is a 788-amino-acid chain: Choline transporter-like protein 1 (788 aa).

The chain crosses the membrane as a helical span at residues 98-118 (FLFFVFLCGWVVVASLGIMWG). An N-linked (GlcNAc...) asparagine glycan is attached at asparagine 276. 4 helical membrane-spanning segments follow: residues 329 to 349 (WWQT…WTVI), 352 to 372 (LLGS…LGFG), 409 to 429 (FVVA…ILFI), and 458 to 478 (LFPF…AIWL). An N-linked (GlcNAc...) asparagine glycan is attached at asparagine 497. Transmembrane regions (helical) follow at residues 531–551 (LFAF…ALAG), 583–603 (LGSI…RVML), 620–640 (WFLM…KFLT), 679–699 (AGIL…ILSF), and 718–738 (YYFV…DLFF).

Belongs to the CTL (choline transporter-like) family.

It localises to the membrane. The chain is Choline transporter-like protein 1 (chtl-1) from Caenorhabditis briggsae.